The primary structure comprises 191 residues: Gamma-glutamylaminecyclotransferase B (191 aa).

7 to 10 (YGTL) serves as a coordination point for substrate. The Proton acceptor role is filled by Glu82. A compositionally biased stretch (polar residues) spans 155-178 (SADFSQNSEQEIKKNNSLQILTST). The tract at residues 155–191 (SADFSQNSEQEIKKNNSLQILTSTGDDHDVNFRGPLQ) is disordered.

The protein belongs to the gamma-glutamylcyclotransferase family.

The catalysed reaction is epsilon-(gamma-L-glutamyl)-L-lysine = 5-oxo-L-proline + L-lysine. Functionally, may contribute to degradation of proteins cross-linked by transglutaminases by degrading the cross-link between a lysine and a glutamic acid residue. Catalyzes the formation of 5-oxo-L-proline from L-gamma-glutamyl-L-epsilon-lysine. The polypeptide is Gamma-glutamylaminecyclotransferase B (ggact.2) (Danio rerio (Zebrafish)).